The following is a 66-amino-acid chain: Photosystem II reaction center protein J (66 aa).

The tract at residues 1–23 (MSGNKSPFPDGRIPDRLPDGRPA) is disordered. Residues 37–57 (LWLVATAGGMAVLFVVGLFFY) traverse the membrane as a helical segment.

This sequence belongs to the PsbJ family. As to quaternary structure, PSII is composed of 1 copy each of membrane proteins PsbA, PsbB, PsbC, PsbD, PsbE, PsbF, PsbH, PsbI, PsbJ, PsbK, PsbL, PsbM, PsbT, PsbX, PsbY, PsbZ, Psb30/Ycf12, peripheral proteins PsbO, CyanoQ (PsbQ), PsbU, PsbV and a large number of cofactors. It forms dimeric complexes.

It localises to the cellular thylakoid membrane. Its function is as follows. One of the components of the core complex of photosystem II (PSII). PSII is a light-driven water:plastoquinone oxidoreductase that uses light energy to abstract electrons from H(2)O, generating O(2) and a proton gradient subsequently used for ATP formation. It consists of a core antenna complex that captures photons, and an electron transfer chain that converts photonic excitation into a charge separation. In Parasynechococcus marenigrum (strain WH8102), this protein is Photosystem II reaction center protein J.